Reading from the N-terminus, the 240-residue chain is Manganese transport system ATP-binding protein MntB (240 aa).

The ABC transporter domain maps to 1–233 (MNIQGLTIAY…KIQFAYGDAP (233 aa)). Residue 33–40 (GPNGAGKS) coordinates ATP.

It belongs to the ABC transporter superfamily.

The protein resides in the cell membrane. Functionally, this protein is probably a component of a manganese permease, a binding protein-dependent, ATP-driven transport system. Probably responsible for energy coupling to the transport system. The protein is Manganese transport system ATP-binding protein MntB (mntB) of Listeria innocua serovar 6a (strain ATCC BAA-680 / CLIP 11262).